A 328-amino-acid polypeptide reads, in one-letter code: Malate dehydrogenase (328 aa).

NAD(+) is bound at residue 12–18 (GAAGQIG). The substrate site is built by Arg-93 and Arg-99. Residues Asn-106, Gln-113, and 130 to 132 (VGN) each bind NAD(+). Substrate-binding residues include Asn-132 and Arg-166. The active-site Proton acceptor is His-191.

This sequence belongs to the LDH/MDH superfamily. MDH type 2 family.

It carries out the reaction (S)-malate + NAD(+) = oxaloacetate + NADH + H(+). Its function is as follows. Catalyzes the reversible oxidation of malate to oxaloacetate. This is Malate dehydrogenase from Dechloromonas aromatica (strain RCB).